The following is a 249-amino-acid chain: tRNA pseudouridine synthase A (249 aa).

Asp-53 functions as the Nucleophile in the catalytic mechanism. Tyr-111 provides a ligand contact to substrate.

This sequence belongs to the tRNA pseudouridine synthase TruA family. As to quaternary structure, homodimer.

It catalyses the reaction uridine(38/39/40) in tRNA = pseudouridine(38/39/40) in tRNA. Formation of pseudouridine at positions 38, 39 and 40 in the anticodon stem and loop of transfer RNAs. The chain is tRNA pseudouridine synthase A from Streptococcus pneumoniae serotype 19F (strain G54).